Consider the following 289-residue polypeptide: ATP phosphoribosyltransferase (289 aa).

The protein belongs to the ATP phosphoribosyltransferase family. Long subfamily. Requires Mg(2+) as cofactor.

It localises to the cytoplasm. It catalyses the reaction 1-(5-phospho-beta-D-ribosyl)-ATP + diphosphate = 5-phospho-alpha-D-ribose 1-diphosphate + ATP. It participates in amino-acid biosynthesis; L-histidine biosynthesis; L-histidine from 5-phospho-alpha-D-ribose 1-diphosphate: step 1/9. Its activity is regulated as follows. Feedback inhibited by histidine. Catalyzes the condensation of ATP and 5-phosphoribose 1-diphosphate to form N'-(5'-phosphoribosyl)-ATP (PR-ATP). Has a crucial role in the pathway because the rate of histidine biosynthesis seems to be controlled primarily by regulation of HisG enzymatic activity. This Koribacter versatilis (strain Ellin345) protein is ATP phosphoribosyltransferase.